A 170-amino-acid chain; its full sequence is NADH-quinone oxidoreductase subunit B (170 aa).

4 residues coordinate [4Fe-4S] cluster: C42, C43, C107, and C136.

It belongs to the complex I 20 kDa subunit family. As to quaternary structure, NDH-1 is composed of 14 different subunits. Subunits NuoB, C, D, E, F, and G constitute the peripheral sector of the complex. It depends on [4Fe-4S] cluster as a cofactor.

The protein localises to the cell inner membrane. It catalyses the reaction a quinone + NADH + 5 H(+)(in) = a quinol + NAD(+) + 4 H(+)(out). Its function is as follows. NDH-1 shuttles electrons from NADH, via FMN and iron-sulfur (Fe-S) centers, to quinones in the respiratory chain. The immediate electron acceptor for the enzyme in this species is believed to be ubiquinone. Couples the redox reaction to proton translocation (for every two electrons transferred, four hydrogen ions are translocated across the cytoplasmic membrane), and thus conserves the redox energy in a proton gradient. The sequence is that of NADH-quinone oxidoreductase subunit B from Campylobacter curvus (strain 525.92).